We begin with the raw amino-acid sequence, 50 residues long: Ampulexin 2 (50 aa).

The first 26 residues, 1–26 (MKAIMVLFYVMTLTIIGSFSMVSGSP), serve as a signal peptide directing secretion.

In terms of assembly, dimer; disulfide-linked. As to expression, expressed in venom sac and, to a lesser extent, in venom gland. Not expressed in brain.

It localises to the secreted. Functionally, amphipathic peptide which probably adopts an alpha-helical structure. Has no antimicrobial activity against E.coli DH5alpha or B.thuringiensis. Is not cytotoxic in vitro. This is Ampulexin 2 from Ampulex compressa (Emerald cockroach wasp).